The chain runs to 496 residues: RNA-binding motif protein, Y chromosome, family 1 member B (496 aa).

In terms of domain architecture, RRM spans 8-85 (GKLFIGGLNR…KAIKVEQAKK (78 aa)). Disordered stretches follow at residues 67–349 (DMNG…HRDY) and 452–496 (KDQR…SSRY). Low complexity-rich tracts occupy residues 97-114 (PASS…SARG) and 149-159 (PVKRGPSSRSG). Over residues 175–184 (NSWMGSQGPM) the composition is skewed to polar residues. Basic and acidic residues-rich tracts occupy residues 204 to 214 (RNDRMSTRHDG), 242 to 253 (DNGHSNRDEHSS), 276 to 289 (AYRD…DESY), 313 to 326 (GYRD…HESY), 335 to 349 (SSRE…HRDY), and 484 to 496 (GESR…SSRY).

In terms of assembly, interacts with splicing factor proteins SFRS3/SRP20, TRA2B/SFRS10, KHDRBS1/SAM68 and KHDRBS3. As to expression, testis-specific.

Its subcellular location is the nucleus. RNA-binding protein which may be involved in spermatogenesis. Required for sperm development, possibly by participating in pre-mRNA splicing in the testis. In Homo sapiens (Human), this protein is RNA-binding motif protein, Y chromosome, family 1 member B (RBMY1B).